Consider the following 335-residue polypeptide: DNA-directed RNA polymerases I and III subunit RPAC1 (335 aa).

N-acetylserine is present on S2. Position 17 is a phosphoserine (S17).

This sequence belongs to the archaeal Rpo3/eukaryotic RPB3 RNA polymerase subunit family. In terms of assembly, component of the RNA polymerase I (Pol I) complex consisting of 14 subunits: RPA135, RPA190, RPC40, RPA14, RPB5, RPO26, RPA43, RPB8, RPA12, RPB10, RPC19, RPC10, RPA49 and RPA34. The complex is composed of a horseshoe-shaped core containing ten subunits (RPA135, RPA190, RPB5, RPO26, RPB8, RPB10, RPC10, RPA12, RPC19 and RPC40) where RPA135 and RPA190 form the DNA-binding cleft. Outside of the core, RPA14 and RPA43 form the stalk that mediates interactions with transcription initiation factors and newly synthesized RNA. Component of the RNA polymerase III (Pol III) complex consisting of at least 17 subunits. Interacts with the RPC19/RPAC2 and RPC53/RPC4. Interacts with retrotransposons Ty integrase, targeting Ty1, Ty2 and Ty4 integration upstream of pol III-transcribed genes.

It localises to the nucleus. The protein localises to the nucleolus. Its function is as follows. DNA-dependent RNA polymerases catalyze the transcription of DNA into RNA using the four ribonucleoside triphosphates as substrates. Common component of RNA polymerases I (Pol I) and III (Pol III) which synthesize ribosomal RNA precursors and small RNAs, such as 5S rRNA and tRNAs, respectively. RPC40 is part of the polymerase core and may function as a clamp element that moves to open and close the cleft. Plays an important role in targeting retrotransposons Ty integration upstream of pol III-transcribed genes such as tRNA genes, allowing Ty1, Ty2 and Ty4 to proliferate and yet minimizing genetic damage. The chain is DNA-directed RNA polymerases I and III subunit RPAC1 from Saccharomyces cerevisiae (strain ATCC 204508 / S288c) (Baker's yeast).